Here is a 411-residue protein sequence, read N- to C-terminus: tRNA (guanine(37)-N(1))-methyltransferase (411 aa).

S-adenosyl-L-methionine is bound by residues histidine 216, 254 to 255 (DL), 282 to 283 (DG), and asparagine 303. Positions 391–411 (ERQASKQDDPKRRKVAAENAA) are disordered.

It belongs to the class I-like SAM-binding methyltransferase superfamily. TRM5/TYW2 family. As to quaternary structure, monomer.

It is found in the mitochondrion matrix. Its subcellular location is the nucleus. The protein localises to the cytoplasm. The catalysed reaction is guanosine(37) in tRNA + S-adenosyl-L-methionine = N(1)-methylguanosine(37) in tRNA + S-adenosyl-L-homocysteine + H(+). In terms of biological role, specifically methylates the N1 position of guanosine-37 in various cytoplasmic and mitochondrial tRNAs. Methylation is not dependent on the nature of the nucleoside 5' of the target nucleoside. This is the first step in the biosynthesis of wybutosine (yW), a modified base adjacent to the anticodon of tRNAs and required for accurate decoding. The chain is tRNA (guanine(37)-N(1))-methyltransferase from Phytophthora infestans (strain T30-4) (Potato late blight agent).